The chain runs to 325 residues: ATP-dependent 6-phosphofructokinase (325 aa).

Residue G12 coordinates ATP. 22–26 is a binding site for ADP; that stretch reads RTIVK. Residues 73-74 and 103-106 each bind ATP; these read RY and GDGS. D104 lines the Mg(2+) pocket. Residue 126–128 participates in substrate binding; it reads TID. The active-site Proton acceptor is the D128. R155 provides a ligand contact to ADP. 170-172 provides a ligand contact to substrate; the sequence is MGH. ADP contacts are provided by residues 186–188, K213, and 215–217; these read GAE and KRS. Substrate-binding positions include E224, R246, and 252–255; that span reads HTQR.

Belongs to the phosphofructokinase type A (PFKA) family. ATP-dependent PFK group I subfamily. Prokaryotic clade 'B1' sub-subfamily. In terms of assembly, homotetramer. Requires Mg(2+) as cofactor.

Its subcellular location is the cytoplasm. The catalysed reaction is beta-D-fructose 6-phosphate + ATP = beta-D-fructose 1,6-bisphosphate + ADP + H(+). The protein operates within carbohydrate degradation; glycolysis; D-glyceraldehyde 3-phosphate and glycerone phosphate from D-glucose: step 3/4. With respect to regulation, allosterically activated by ADP and other diphosphonucleosides, and allosterically inhibited by phosphoenolpyruvate. Functionally, catalyzes the phosphorylation of D-fructose 6-phosphate to fructose 1,6-bisphosphate by ATP, the first committing step of glycolysis. The sequence is that of ATP-dependent 6-phosphofructokinase from Mycoplasma mobile (strain ATCC 43663 / 163K / NCTC 11711) (Mesomycoplasma mobile).